The sequence spans 153 residues: 6,7-dimethyl-8-ribityllumazine synthase (153 aa).

5-amino-6-(D-ribitylamino)uracil-binding positions include Phe-22, 56-58 (AFE), and 80-82 (AVI). Residue 85 to 86 (ST) participates in (2S)-2-hydroxy-3-oxobutyl phosphate binding. His-88 acts as the Proton donor in catalysis. Phe-113 contributes to the 5-amino-6-(D-ribitylamino)uracil binding site. (2S)-2-hydroxy-3-oxobutyl phosphate is bound at residue Arg-127.

It belongs to the DMRL synthase family.

The enzyme catalyses (2S)-2-hydroxy-3-oxobutyl phosphate + 5-amino-6-(D-ribitylamino)uracil = 6,7-dimethyl-8-(1-D-ribityl)lumazine + phosphate + 2 H2O + H(+). It participates in cofactor biosynthesis; riboflavin biosynthesis; riboflavin from 2-hydroxy-3-oxobutyl phosphate and 5-amino-6-(D-ribitylamino)uracil: step 1/2. Functionally, catalyzes the formation of 6,7-dimethyl-8-ribityllumazine by condensation of 5-amino-6-(D-ribitylamino)uracil with 3,4-dihydroxy-2-butanone 4-phosphate. This is the penultimate step in the biosynthesis of riboflavin. The polypeptide is 6,7-dimethyl-8-ribityllumazine synthase (Fusobacterium nucleatum subsp. nucleatum (strain ATCC 25586 / DSM 15643 / BCRC 10681 / CIP 101130 / JCM 8532 / KCTC 2640 / LMG 13131 / VPI 4355)).